The chain runs to 528 residues: Glucans biosynthesis protein G 2 (528 aa).

An N-terminal signal peptide occupies residues 1-44; sequence MRLHLTFNHSTPATGRKNTKHTLFFGSMLACIISIISLVVPAYG.

The protein belongs to the OpgD/OpgG family.

The protein localises to the periplasm. Its pathway is glycan metabolism; osmoregulated periplasmic glucan (OPG) biosynthesis. Functionally, involved in the biosynthesis of osmoregulated periplasmic glucans (OPGs). In Shewanella oneidensis (strain ATCC 700550 / JCM 31522 / CIP 106686 / LMG 19005 / NCIMB 14063 / MR-1), this protein is Glucans biosynthesis protein G 2 (opgG2).